The chain runs to 225 residues: Enolase-phosphatase E1 (225 aa).

The protein belongs to the HAD-like hydrolase superfamily. MasA/MtnC family. In terms of assembly, monomer. Requires Mg(2+) as cofactor.

The catalysed reaction is 5-methylsulfanyl-2,3-dioxopentyl phosphate + H2O = 1,2-dihydroxy-5-(methylsulfanyl)pent-1-en-3-one + phosphate. Its pathway is amino-acid biosynthesis; L-methionine biosynthesis via salvage pathway; L-methionine from S-methyl-5-thio-alpha-D-ribose 1-phosphate: step 3/6. It participates in amino-acid biosynthesis; L-methionine biosynthesis via salvage pathway; L-methionine from S-methyl-5-thio-alpha-D-ribose 1-phosphate: step 4/6. In terms of biological role, bifunctional enzyme that catalyzes the enolization of 2,3-diketo-5-methylthiopentyl-1-phosphate (DK-MTP-1-P) into the intermediate 2-hydroxy-3-keto-5-methylthiopentenyl-1-phosphate (HK-MTPenyl-1-P), which is then dephosphorylated to form the acireductone 1,2-dihydroxy-3-keto-5-methylthiopentene (DHK-MTPene). The sequence is that of Enolase-phosphatase E1 from Pseudomonas aeruginosa (strain UCBPP-PA14).